Consider the following 103-residue polypeptide: Protein S100-A16 (103 aa).

Residues 12–47 (VIVLVENFYKYVSKYSLVKNKISKSSFREMLQKELN) enclose the EF-hand 1; degenerate domain. An EF-hand 2 domain is found at 54–89 (GNRKAADKLIQNLDANHDGRISFDEYWTLIGGITGP). Positions 67, 69, 71, 73, and 78 each coordinate Ca(2+).

The protein belongs to the S-100 family. Homodimer. Interacts with TP53. As to expression, ubiquitous. Highly expressed in esophagus, adipose tissues and colon. Expressed at lower level in lung, brain, pancreas and skeletal muscle. Expression is up-regulated in tumors of bladder, lung, thyroid gland, pancreas and ovary. Expressed in astrocytes.

It is found in the nucleus. The protein resides in the nucleolus. Its subcellular location is the cytoplasm. Functionally, calcium-binding protein. Binds one calcium ion per monomer. Can promote differentiation of adipocytes (in vitro). Overexpression in preadipocytes increases their proliferation, enhances adipogenesis and reduces insulin-stimulated glucose uptake. The sequence is that of Protein S100-A16 from Homo sapiens (Human).